A 222-amino-acid polypeptide reads, in one-letter code: Tegument protein UL26 (222 aa).

This sequence belongs to the herpesviridae US22 family. Interacts with UL25. Interacts with ISGylation machinery components ISG15, UBA7 and HERC5; these interactions inhibit global protein ISGylation. ISGylated; ISGylation regulates UL26 stability and inhibits its activities to suppress NF-kappa-B signaling.

It localises to the virion tegument. It is found in the host nucleus. Its function is as follows. Plays a role in the inhibition of host NF-kappa-B. This inhibition affects both the canonical and the non-canonical pathways. Blocks the induction of host IKK phosphorylation. May also influence the normal phosphorylation state of several tegument proteins including pp28 in virions. Also suppresses virus-induced ISGylation independent of its own ISGylation. The protein is Tegument protein UL26 (UL26) of Homo sapiens (Human).